The sequence spans 254 residues: Leucyl/phenylalanyl-tRNA--protein transferase (254 aa).

Belongs to the L/F-transferase family.

The protein localises to the cytoplasm. It catalyses the reaction N-terminal L-lysyl-[protein] + L-leucyl-tRNA(Leu) = N-terminal L-leucyl-L-lysyl-[protein] + tRNA(Leu) + H(+). The enzyme catalyses N-terminal L-arginyl-[protein] + L-leucyl-tRNA(Leu) = N-terminal L-leucyl-L-arginyl-[protein] + tRNA(Leu) + H(+). It carries out the reaction L-phenylalanyl-tRNA(Phe) + an N-terminal L-alpha-aminoacyl-[protein] = an N-terminal L-phenylalanyl-L-alpha-aminoacyl-[protein] + tRNA(Phe). Functions in the N-end rule pathway of protein degradation where it conjugates Leu, Phe and, less efficiently, Met from aminoacyl-tRNAs to the N-termini of proteins containing an N-terminal arginine or lysine. This is Leucyl/phenylalanyl-tRNA--protein transferase from Burkholderia cenocepacia (strain ATCC BAA-245 / DSM 16553 / LMG 16656 / NCTC 13227 / J2315 / CF5610) (Burkholderia cepacia (strain J2315)).